Consider the following 207-residue polypeptide: Histidine biosynthesis bifunctional protein HisIE (207 aa).

The tract at residues 1 to 117 (MSLVTTINWE…GKQEQPALVF (117 aa)) is phosphoribosyl-AMP cyclohydrolase. Residues 118–207 (LHQLEQVLAN…TEKLQERHNK (90 aa)) form a phosphoribosyl-ATP pyrophosphohydrolase region.

The protein in the N-terminal section; belongs to the PRA-CH family. This sequence in the C-terminal section; belongs to the PRA-PH family.

The protein localises to the cytoplasm. The enzyme catalyses 1-(5-phospho-beta-D-ribosyl)-ATP + H2O = 1-(5-phospho-beta-D-ribosyl)-5'-AMP + diphosphate + H(+). It carries out the reaction 1-(5-phospho-beta-D-ribosyl)-5'-AMP + H2O = 1-(5-phospho-beta-D-ribosyl)-5-[(5-phospho-beta-D-ribosylamino)methylideneamino]imidazole-4-carboxamide. It functions in the pathway amino-acid biosynthesis; L-histidine biosynthesis; L-histidine from 5-phospho-alpha-D-ribose 1-diphosphate: step 2/9. Its pathway is amino-acid biosynthesis; L-histidine biosynthesis; L-histidine from 5-phospho-alpha-D-ribose 1-diphosphate: step 3/9. This Photobacterium profundum (strain SS9) protein is Histidine biosynthesis bifunctional protein HisIE.